Reading from the N-terminus, the 432-residue chain is Amino-acid acetyltransferase (432 aa).

The N-acetyltransferase domain maps to 286–425 (EQLREAGIED…ASLYNFQRNS (140 aa)).

Belongs to the acetyltransferase family. ArgA subfamily.

The protein resides in the cytoplasm. The catalysed reaction is L-glutamate + acetyl-CoA = N-acetyl-L-glutamate + CoA + H(+). It participates in amino-acid biosynthesis; L-arginine biosynthesis; N(2)-acetyl-L-ornithine from L-glutamate: step 1/4. The chain is Amino-acid acetyltransferase from Pseudomonas paraeruginosa (strain DSM 24068 / PA7) (Pseudomonas aeruginosa (strain PA7)).